A 729-amino-acid polypeptide reads, in one-letter code: Polyribonucleotide nucleotidyltransferase (729 aa).

Mg(2+)-binding residues include D509 and D515. The region spanning 575-634 (PRVISVKIPVDKIGEVIGPKGKMINQIQADSGAEITVEDDGTIYIGAVDGPSAESARSAI) is the KH domain. Residues 646-718 (GERYLGTIVK…SRGKISLSPS (73 aa)) form the S1 motif domain.

Belongs to the polyribonucleotide nucleotidyltransferase family. It depends on Mg(2+) as a cofactor.

It is found in the cytoplasm. It catalyses the reaction RNA(n+1) + phosphate = RNA(n) + a ribonucleoside 5'-diphosphate. In terms of biological role, involved in mRNA degradation. Catalyzes the phosphorolysis of single-stranded polyribonucleotides processively in the 3'- to 5'-direction. This chain is Polyribonucleotide nucleotidyltransferase, found in Frankia casuarinae (strain DSM 45818 / CECT 9043 / HFP020203 / CcI3).